Consider the following 320-residue polypeptide: o-succinylbenzoate synthase (320 aa).

The Proton donor role is filled by Lys133. Positions 161, 190, and 213 each coordinate Mg(2+). The Proton acceptor role is filled by Lys235.

The protein belongs to the mandelate racemase/muconate lactonizing enzyme family. MenC type 1 subfamily. A divalent metal cation is required as a cofactor.

The enzyme catalyses (1R,6R)-6-hydroxy-2-succinyl-cyclohexa-2,4-diene-1-carboxylate = 2-succinylbenzoate + H2O. Its pathway is quinol/quinone metabolism; 1,4-dihydroxy-2-naphthoate biosynthesis; 1,4-dihydroxy-2-naphthoate from chorismate: step 4/7. The protein operates within quinol/quinone metabolism; menaquinone biosynthesis. Its function is as follows. Converts 2-succinyl-6-hydroxy-2,4-cyclohexadiene-1-carboxylate (SHCHC) to 2-succinylbenzoate (OSB). This Escherichia coli O9:H4 (strain HS) protein is o-succinylbenzoate synthase.